We begin with the raw amino-acid sequence, 1402 residues long: Nuclear pore complex protein Nup160 (1402 aa).

Phosphoserine is present on residues S10, S456, S915, and S1123.

In terms of assembly, part of the nuclear pore complex (NPC). Forms part of the NUP160 subcomplex in the nuclear pore which is composed of NUP160, NUP133, NUP107 and NUP96. This complex plays a role in RNA export and in tethering NUP98 and NUP153 to the nucleus.

It localises to the nucleus. The protein localises to the nuclear pore complex. Its function is as follows. Functions as a component of the nuclear pore complex (NPC). Involved in poly(A)+ RNA transport. The sequence is that of Nuclear pore complex protein Nup160 (Nup160) from Mus musculus (Mouse).